Reading from the N-terminus, the 406-residue chain is MNETPKPNSFRSGPDEDGRFGIYGGRFVAETLMPLILDLQDEWNKAKSDPAFQAELKHLGAHYIGRPSPLYFAERLTAELGGAKIYFKREELNHTGSHKINNCIGQILLAKRMGKTRIIAETGAGQHGVASATVAARFGLPCVVYMGATDVERQAPNVFRMKLLGAEVKPVTAGSGTLKDAMNEALRDWVTNVEDTYYLIGTAAGPHPYPEMVRDFQSVIGAEAKEQMLAAEGRLPDLVVAAVGGGSNAIGIFHPFLDDSSVKIVGVEAGGKGLQGDEHCASITAGSPGVLHGNRTYLLQDGDGQIKEGHSISAGLDYPGIGPEHSWLSDIGRVDYVPIMDHEALEAFQTLTRLEGIIPALEAAHAIAEVIKRAPKMGKDEIILMNLSGRGDKDIFTVGKILGMGL.

Lys-99 is modified (N6-(pyridoxal phosphate)lysine).

It belongs to the TrpB family. Tetramer of two alpha and two beta chains. The cofactor is pyridoxal 5'-phosphate.

The catalysed reaction is (1S,2R)-1-C-(indol-3-yl)glycerol 3-phosphate + L-serine = D-glyceraldehyde 3-phosphate + L-tryptophan + H2O. The protein operates within amino-acid biosynthesis; L-tryptophan biosynthesis; L-tryptophan from chorismate: step 5/5. Functionally, the beta subunit is responsible for the synthesis of L-tryptophan from indole and L-serine. Essential for production of nod factors and establishment of symbiosis. In Rhizobium etli (strain ATCC 51251 / DSM 11541 / JCM 21823 / NBRC 15573 / CFN 42), this protein is Tryptophan synthase beta chain.